We begin with the raw amino-acid sequence, 577 residues long: uncharacterized protein (577 aa).

Composition is skewed to polar residues over residues M1–S21 and S68–E87. Disordered regions lie at residues M1–P24 and S68–V93. A run of 12 helical transmembrane segments spans residues C139–A159, L174–L194, I204–I224, F232–M252, I262–F282, W292–C312, P367–L387, M402–I422, L447–S467, V473–F493, Y504–F526, and G543–F563.

This sequence belongs to the major facilitator superfamily. CAR1 family.

Its subcellular location is the endoplasmic reticulum. It is found in the membrane. This is an uncharacterized protein from Schizosaccharomyces pombe (strain 972 / ATCC 24843) (Fission yeast).